A 265-amino-acid chain; its full sequence is Chlorophyll a-b binding protein 1A, chloroplastic (265 aa).

The transit peptide at 1-34 directs the protein to the chloroplast; the sequence is MAAAAMALSSPSFAGQAVKLSPSASENSGNGRIT. Residues 151-171 form a helical membrane-spanning segment; it reads LVHAQSILAIWACQVVLMGAV. Residues Val152, Ser156, Gln164, Glu172, Arg175, and Leu181 each coordinate chlorophyll b. Positions 212, 213, 216, 218, 230, 245, and 254 each coordinate chlorophyll a. The chain crosses the membrane as a helical span at residues 219-239; the sequence is LAMFSMFGFFVQAIVTGKGPL. Phe261 contributes to the chlorophyll b binding site.

It belongs to the light-harvesting chlorophyll a/b-binding (LHC) protein family. As to quaternary structure, the LHC complex consists of chlorophyll a-b binding proteins. It depends on Binds at least 14 chlorophylls (8 Chl-a and 6 Chl-b) and carotenoids such as lutein and neoxanthin. as a cofactor. Post-translationally, photoregulated by reversible phosphorylation of its threonine residues.

The protein resides in the plastid. It is found in the chloroplast thylakoid membrane. The light-harvesting complex (LHC) functions as a light receptor, it captures and delivers excitation energy to photosystems with which it is closely associated. The sequence is that of Chlorophyll a-b binding protein 1A, chloroplastic (CAB1A) from Solanum lycopersicum (Tomato).